A 515-amino-acid chain; its full sequence is Putative ammonium transporter 2 (515 aa).

12 helical membrane passes run 34–54, 72–92, 124–144, 156–176, 191–211, 226–246, 266–286, 291–311, 321–337, 346–366, 381–401, and 404–424; these read GVWMMASSFIIFTMTAGFGLL, VFDVIFGGLAYWMFGYGLTFG, GISYSLFIFQMSFATTTSTIV, SHCFISFFITLVHSVAGHWVW, AGCSAVHLVGGVSGLVATLYL, VSDPTKAILGFLMIWWGWLAF, AVGTILASAGGGVVTVIITRL, IQMDMLIDGMLASLVASTGGC, LVGAIGSSLALAAYPVT, VGVFPVHVVGSIWGMIAPAIF, FQTSDEINGLLYGGGFYLLFL, and FVILVIGTYSAICAFIILFLI.

Belongs to the ammonia transporter channel (TC 1.A.11.2) family.

Its subcellular location is the membrane. Functionally, involved in the uptake of ammonia. Implicated in aging. This is Putative ammonium transporter 2 (amt-2) from Caenorhabditis elegans.